The following is a 515-amino-acid chain: Bifunctional purine biosynthesis protein PurH (515 aa).

An MGS-like domain is found at 1-145 (MTKRALISVS…KNHASVTVVV (145 aa)).

This sequence belongs to the PurH family.

It catalyses the reaction (6R)-10-formyltetrahydrofolate + 5-amino-1-(5-phospho-beta-D-ribosyl)imidazole-4-carboxamide = 5-formamido-1-(5-phospho-D-ribosyl)imidazole-4-carboxamide + (6S)-5,6,7,8-tetrahydrofolate. The catalysed reaction is IMP + H2O = 5-formamido-1-(5-phospho-D-ribosyl)imidazole-4-carboxamide. It participates in purine metabolism; IMP biosynthesis via de novo pathway; 5-formamido-1-(5-phospho-D-ribosyl)imidazole-4-carboxamide from 5-amino-1-(5-phospho-D-ribosyl)imidazole-4-carboxamide (10-formyl THF route): step 1/1. The protein operates within purine metabolism; IMP biosynthesis via de novo pathway; IMP from 5-formamido-1-(5-phospho-D-ribosyl)imidazole-4-carboxamide: step 1/1. The chain is Bifunctional purine biosynthesis protein PurH from Streptococcus pyogenes serotype M6 (strain ATCC BAA-946 / MGAS10394).